The chain runs to 619 residues: uncharacterized protein (619 aa).

An N-terminal signal peptide occupies residues 1-21 (MKKLIAIIAVAAVVIAGFVFT).

This is an uncharacterized protein from Archaeoglobus fulgidus (strain ATCC 49558 / DSM 4304 / JCM 9628 / NBRC 100126 / VC-16).